The following is a 156-amino-acid chain: D-aminoacyl-tRNA deacylase (156 aa).

The Gly-cisPro motif, important for rejection of L-amino acids motif lies at Gly-137–Pro-138.

Belongs to the DTD family. As to quaternary structure, homodimer.

It is found in the cytoplasm. The catalysed reaction is glycyl-tRNA(Ala) + H2O = tRNA(Ala) + glycine + H(+). The enzyme catalyses a D-aminoacyl-tRNA + H2O = a tRNA + a D-alpha-amino acid + H(+). Functionally, an aminoacyl-tRNA editing enzyme that deacylates mischarged D-aminoacyl-tRNAs. Also deacylates mischarged glycyl-tRNA(Ala), protecting cells against glycine mischarging by AlaRS. Acts via tRNA-based rather than protein-based catalysis; rejects L-amino acids rather than detecting D-amino acids in the active site. By recycling D-aminoacyl-tRNA to D-amino acids and free tRNA molecules, this enzyme counteracts the toxicity associated with the formation of D-aminoacyl-tRNA entities in vivo and helps enforce protein L-homochirality. This is D-aminoacyl-tRNA deacylase from Ruegeria sp. (strain TM1040) (Silicibacter sp.).